The sequence spans 105 residues: Large ribosomal subunit protein eL36 (105 aa).

Positions 9-31 (VGLNKGHKVTKNVSKPRHSRRRR) are disordered. The segment covering 13-31 (KGHKVTKNVSKPRHSRRRR) has biased composition (basic residues). Lys62 carries the post-translational modification N6-acetyllysine.

This sequence belongs to the eukaryotic ribosomal protein eL36 family. As to quaternary structure, component of the large ribosomal subunit.

Its subcellular location is the cytoplasm. It is found in the cytosol. Component of the large ribosomal subunit. The ribosome is a large ribonucleoprotein complex responsible for the synthesis of proteins in the cell. The sequence is that of Large ribosomal subunit protein eL36 (RPL36) from Oryctolagus cuniculus (Rabbit).